Consider the following 398-residue polypeptide: MESGLLRPAPVSEVIVLHYNYTGKLRGARYQPGAGLRADAVVCLAVCAFIVLENLAVLLVLGRHPRFHAPMFLLLGSLTLSDLLAGAAYAANILLSGPLTLKLSPALWFAREGGVFVALTASVLSLLAIALERSLTMARRGPAPVSSRGRTLAMAAAAWGVSLLLGLLPALGWNCLGRLDACSTVLPLYAKAYVLFCVLAFVGILAAICALYARIYCQVRANARRLPARPGTAGTTSTRARRKPRSLALLRTLSVVLLAFVACWGPLFLLLLLDVACPARTCPVLLQADPFLGLAMANSLLNPIIYTLTNRDLRHALLRLVCCGRHSCGRDPSGSQQSASAAEASGGLRRCLPPGLDGSFSGSERSSPQRDGLDTSGSTGSPGAPTAARTLVSEPAAD.

The Extracellular segment spans residues 1–40; the sequence is MESGLLRPAPVSEVIVLHYNYTGKLRGARYQPGAGLRADA. The N-linked (GlcNAc...) asparagine glycan is linked to Asn20. The chain crosses the membrane as a helical span at residues 41-61; it reads VVCLAVCAFIVLENLAVLLVL. Over 62–70 the chain is Cytoplasmic; the sequence is GRHPRFHAP. Residues 71–91 traverse the membrane as a helical segment; sequence MFLLLGSLTLSDLLAGAAYAA. The Extracellular portion of the chain corresponds to 92–111; that stretch reads NILLSGPLTLKLSPALWFAR. A helical transmembrane segment spans residues 112 to 132; it reads EGGVFVALTASVLSLLAIALE. At 133 to 151 the chain is on the cytoplasmic side; sequence RSLTMARRGPAPVSSRGRT. Residues 152 to 172 form a helical membrane-spanning segment; sequence LAMAAAAWGVSLLLGLLPALG. The Extracellular portion of the chain corresponds to 173 to 192; the sequence is WNCLGRLDACSTVLPLYAKA. A helical transmembrane segment spans residues 193 to 213; sequence YVLFCVLAFVGILAAICALYA. Residues 214 to 252 are Cytoplasmic-facing; sequence RIYCQVRANARRLPARPGTAGTTSTRARRKPRSLALLRT. The helical transmembrane segment at 253–273 threads the bilayer; that stretch reads LSVVLLAFVACWGPLFLLLLL. The Extracellular segment spans residues 274 to 287; it reads DVACPARTCPVLLQ. The helical transmembrane segment at 288–308 threads the bilayer; that stretch reads ADPFLGLAMANSLLNPIIYTL. The Cytoplasmic segment spans residues 309–398; it reads TNRDLRHALL…RTLVSEPAAD (90 aa). The S-palmitoyl cysteine moiety is linked to residue Cys323. The interval 329-398 is disordered; the sequence is GRDPSGSQQS…RTLVSEPAAD (70 aa). The segment covering 333-347 has biased composition (low complexity); the sequence is SGSQQSASAAEASGG. Ser381 bears the Phosphoserine mark.

This sequence belongs to the G-protein coupled receptor 1 family. As to expression, widely expressed in the brain, most prominently in the corpus callosum, which is predominantly white matter. Detected in spleen, peripheral blood leukocytes, placenta, lung, aorta and fetal spleen. Low-level signal detected in many tissue extracts. Overexpressed in leukemic large granular lymphocytes. Isoform 1 is predominantly expressed in peripheral tissues. Isoform 2 is expressed in brain, spleen and peripheral blood leukocytes.

The protein localises to the cell membrane. Its function is as follows. Receptor for the lysosphingolipid sphingosine 1-phosphate (S1P). S1P is a bioactive lysophospholipid that elicits diverse physiological effect on most types of cells and tissues. Is coupled to both the G(i/0)alpha and G(12) subclass of heteromeric G-proteins. May play a regulatory role in the transformation of radial glial cells into astrocytes and may affect proliferative activity of these cells. The chain is Sphingosine 1-phosphate receptor 5 (S1PR5) from Homo sapiens (Human).